The following is a 567-amino-acid chain: Ran-binding protein 3 (567 aa).

A compositionally biased stretch (basic and acidic residues) spans 1–10; sequence MADLANEEKP. Disordered regions lie at residues 1-263, 332-373, and 515-567; these read MADL…FVFG, LSPP…AESA, and VEQE…TGST. Position 2 is an N-acetylalanine (alanine 2). 2 positions are modified to N6-acetyllysine: lysine 9 and lysine 21. Basic and acidic residues predominate over residues 39 to 49; the sequence is EEPRGEAEAPH. At threonine 75 the chain carries Phosphothreonine. Pro residues predominate over residues 75–89; it reads TPPPPAPEAQLPPFP. Phosphoserine occurs at positions 100, 101, and 108. The Nuclear localization signal signature appears at 117-125; that stretch reads PPVKRERTS. Position 124 is a phosphothreonine (threonine 124). Composition is skewed to polar residues over residues 125–134 and 184–197; these read SSLTQFPPSQ and ALSQ…TNGV. A Phosphoserine modification is found at serine 126. Residues serine 219, serine 333, serine 353, serine 355, and serine 372 each carry the phosphoserine modification. A compositionally biased stretch (low complexity) spans 347–362; the sequence is ENAAAESGSESSSQEA. Residues 378-518 form the RanBD1 domain; that stretch reads KATARKCLLE…LALRSRVEQE (141 aa). Residues 534-544 are compositionally biased toward acidic residues; it reads NEEDDSDDDDV. Serine 539 bears the Phosphoserine mark. A compositionally biased stretch (low complexity) spans 549-567; sequence GATAAGAGDEGDGQTTGST.

Interacts with CHC1 in a Ran-stimulated manner. Interacts with XPO1. Interacts (via its C-terminal R domain) with SMAD2 (dephosphorylated form via its MH1 and MH2 domains); the interaction results in the nuclear export of SMAD2 and termination of the TGF-beta signaling. Interacts (via its C-terminal R domain) with SMAD3 (dephosphorylated form via its MH1 domain); the interaction results in the nuclear export of SMAD3 and termination of the TGF-beta signaling. Phosphorylation at Ser-126 promotes its import into the nucleus. In terms of tissue distribution, widely expressed with high levels in testis and heart.

The protein resides in the cytoplasm. It localises to the nucleus. Its function is as follows. Acts as a cofactor for XPO1/CRM1-mediated nuclear export, perhaps as export complex scaffolding protein. Bound to XPO1/CRM1, stabilizes the XPO1/CRM1-cargo interaction. In the absence of Ran-bound GTP prevents binding of XPO1/CRM1 to the nuclear pore complex. Binds to CHC1/RCC1 and increases the guanine nucleotide exchange activity of CHC1/RCC1. Recruits XPO1/CRM1 to CHC1/RCC1 in a Ran-dependent manner. Negative regulator of TGF-beta signaling through interaction with the R-SMAD proteins, SMAD2 and SMAD3, and mediating their nuclear export. The polypeptide is Ran-binding protein 3 (RANBP3) (Homo sapiens (Human)).